The chain runs to 104 residues: Small ribosomal subunit protein uS10 (104 aa).

This sequence belongs to the universal ribosomal protein uS10 family. In terms of assembly, part of the 30S ribosomal subunit.

In terms of biological role, involved in the binding of tRNA to the ribosomes. The chain is Small ribosomal subunit protein uS10 from Xanthomonas oryzae pv. oryzae (strain MAFF 311018).